Reading from the N-terminus, the 66-residue chain is Small ribosomal subunit protein bS21 (66 aa).

The protein belongs to the bacterial ribosomal protein bS21 family.

The polypeptide is Small ribosomal subunit protein bS21 (Rickettsia akari (strain Hartford)).